A 145-amino-acid polypeptide reads, in one-letter code: SsrA-binding protein (145 aa).

The protein belongs to the SmpB family.

It localises to the cytoplasm. Required for rescue of stalled ribosomes mediated by trans-translation. Binds to transfer-messenger RNA (tmRNA), required for stable association of tmRNA with ribosomes. tmRNA and SmpB together mimic tRNA shape, replacing the anticodon stem-loop with SmpB. tmRNA is encoded by the ssrA gene; the 2 termini fold to resemble tRNA(Ala) and it encodes a 'tag peptide', a short internal open reading frame. During trans-translation Ala-aminoacylated tmRNA acts like a tRNA, entering the A-site of stalled ribosomes, displacing the stalled mRNA. The ribosome then switches to translate the ORF on the tmRNA; the nascent peptide is terminated with the 'tag peptide' encoded by the tmRNA and targeted for degradation. The ribosome is freed to recommence translation, which seems to be the essential function of trans-translation. This chain is SsrA-binding protein, found in Mycoplasma genitalium (strain ATCC 33530 / DSM 19775 / NCTC 10195 / G37) (Mycoplasmoides genitalium).